Here is a 344-residue protein sequence, read N- to C-terminus: Transmembrane protein 268 (344 aa).

The tract at residues 1–31 (MACEPQMDPGGAAGPLPTSSPGWSPLPGGSP) is disordered. Low complexity predominate over residues 14–27 (GPLPTSSPGWSPLP). Transmembrane regions (helical) follow at residues 106-126 (AFAV…SQMF) and 133-153 (AGVL…VVIF). The tract at residues 244–266 (TANEGPENLLEETPLLPDRPGST) is disordered. The span at 247–259 (EGPENLLEETPLL) shows a compositional bias: low complexity.

As to quaternary structure, interacts with ITGAM; this interaction inhibits ITGAM degradation via the endosome-lysosome pathway. Interacts with ITGB4; this interaction prevents ITGB4 degradation.

It is found in the cell membrane. Its function is as follows. Stabilizes cell surface expression of ITGAM and participates in the adhesion and migration of phagocytes during bacterial clearance. The chain is Transmembrane protein 268 (TMEM268) from Bos taurus (Bovine).